The primary structure comprises 158 residues: Retinoic acid receptor beta (158 aa).

Positions Arg1 to Val18 are enriched in low complexity. Residues Arg1–Pro24 form a disordered region. The nuclear receptor DNA-binding region spans Tyr31–Asn106. 2 consecutive NR C4-type zinc fingers follow at residues Cys34–Cys54 and Cys70–Cys94. The NR LBD domain maps to Glu129 to Ser158.

The protein belongs to the nuclear hormone receptor family. NR1 subfamily. Heterodimer; with a RXR molecule. Binds DNA preferentially as a RAR/RXR heterodimer.

It localises to the nucleus. Receptor for retinoic acid. Retinoic acid receptors bind as heterodimers to their target response elements in response to their ligands, all-trans or 9-cis retinoic acid, and regulate gene expression in various biological processes. The RAR/RXR heterodimers bind to the retinoic acid response elements (RARE) composed of tandem 5'-AGGTCA-3' sites known as DR1-DR5. This Notophthalmus viridescens (Eastern newt) protein is Retinoic acid receptor beta (RARB).